Reading from the N-terminus, the 126-residue chain is Putative lipoprotein LprD (126 aa).

The N-terminal stretch at 1–21 (MSTTRRRRPALIALVIIATCG) is a signal peptide. The N-palmitoyl cysteine moiety is linked to residue Cys22. Cys22 carries the S-diacylglycerol cysteine lipid modification. A helical membrane pass occupies residues 40–60 (FQNLGYALQWPLFAWFCVYAY). Residues 70 to 101 (PPQPPTGGAAAEIPAGLLPERPKPAQQPPDDP) form a disordered region.

It to M.leprae ML1177.

It is found in the cell membrane. The polypeptide is Putative lipoprotein LprD (lprD) (Mycobacterium tuberculosis (strain CDC 1551 / Oshkosh)).